Consider the following 87-residue polypeptide: UPF0473 protein Dred_0776 (87 aa).

This sequence belongs to the UPF0473 family.

This chain is UPF0473 protein Dred_0776, found in Desulforamulus reducens (strain ATCC BAA-1160 / DSM 100696 / MI-1) (Desulfotomaculum reducens).